Reading from the N-terminus, the 298-residue chain is Lipoyl synthase (298 aa).

Positions 40, 45, 51, 67, 71, 74, and 280 each coordinate [4Fe-4S] cluster. One can recognise a Radical SAM core domain in the interval 53 to 269; the sequence is AVRRTATFMI…KEIAMQKGFS (217 aa).

This sequence belongs to the radical SAM superfamily. Lipoyl synthase family. [4Fe-4S] cluster is required as a cofactor.

The protein resides in the cytoplasm. It carries out the reaction [[Fe-S] cluster scaffold protein carrying a second [4Fe-4S](2+) cluster] + N(6)-octanoyl-L-lysyl-[protein] + 2 oxidized [2Fe-2S]-[ferredoxin] + 2 S-adenosyl-L-methionine + 4 H(+) = [[Fe-S] cluster scaffold protein] + N(6)-[(R)-dihydrolipoyl]-L-lysyl-[protein] + 4 Fe(3+) + 2 hydrogen sulfide + 2 5'-deoxyadenosine + 2 L-methionine + 2 reduced [2Fe-2S]-[ferredoxin]. It functions in the pathway protein modification; protein lipoylation via endogenous pathway; protein N(6)-(lipoyl)lysine from octanoyl-[acyl-carrier-protein]. Functionally, catalyzes the radical-mediated insertion of two sulfur atoms into the C-6 and C-8 positions of the octanoyl moiety bound to the lipoyl domains of lipoate-dependent enzymes, thereby converting the octanoylated domains into lipoylated derivatives. The chain is Lipoyl synthase from Bacillus velezensis (strain DSM 23117 / BGSC 10A6 / LMG 26770 / FZB42) (Bacillus amyloliquefaciens subsp. plantarum).